The following is a 341-amino-acid chain: Phosphatidylserine decarboxylase proenzyme (341 aa).

Residues D90, H147, and S254 each act as charge relay system; for autoendoproteolytic cleavage activity in the active site. Residue S254 is the Schiff-base intermediate with substrate; via pyruvic acid; for decarboxylase activity of the active site. A Pyruvic acid (Ser); by autocatalysis modification is found at S254. Residues 287–341 (RQDEQTPVVFPEGTELEENDAAQPPVAATSEPVQADGQNPAAEVSGQTGHKPDAP) form a disordered region.

It belongs to the phosphatidylserine decarboxylase family. PSD-B subfamily. Prokaryotic type I sub-subfamily. Heterodimer of a large membrane-associated beta subunit and a small pyruvoyl-containing alpha subunit. Pyruvate is required as a cofactor. Post-translationally, is synthesized initially as an inactive proenzyme. Formation of the active enzyme involves a self-maturation process in which the active site pyruvoyl group is generated from an internal serine residue via an autocatalytic post-translational modification. Two non-identical subunits are generated from the proenzyme in this reaction, and the pyruvate is formed at the N-terminus of the alpha chain, which is derived from the carboxyl end of the proenzyme. The autoendoproteolytic cleavage occurs by a canonical serine protease mechanism, in which the side chain hydroxyl group of the serine supplies its oxygen atom to form the C-terminus of the beta chain, while the remainder of the serine residue undergoes an oxidative deamination to produce ammonia and the pyruvoyl prosthetic group on the alpha chain. During this reaction, the Ser that is part of the protease active site of the proenzyme becomes the pyruvoyl prosthetic group, which constitutes an essential element of the active site of the mature decarboxylase.

Its subcellular location is the cell membrane. It carries out the reaction a 1,2-diacyl-sn-glycero-3-phospho-L-serine + H(+) = a 1,2-diacyl-sn-glycero-3-phosphoethanolamine + CO2. It functions in the pathway phospholipid metabolism; phosphatidylethanolamine biosynthesis; phosphatidylethanolamine from CDP-diacylglycerol: step 2/2. In terms of biological role, catalyzes the formation of phosphatidylethanolamine (PtdEtn) from phosphatidylserine (PtdSer). This chain is Phosphatidylserine decarboxylase proenzyme, found in Pectobacterium atrosepticum (strain SCRI 1043 / ATCC BAA-672) (Erwinia carotovora subsp. atroseptica).